The chain runs to 1677 residues: Pentafunctional AROM polypeptide (1677 aa).

Positions methionine 1 to aspartate 394 are 3-dehydroquinate synthase. Residues aspartate 50–asparagine 52, glutamate 89–lysine 92, glycine 120–valine 122, and aspartate 125 contribute to the NAD(+) site. Arginine 136 provides a ligand contact to 7-phospho-2-dehydro-3-deoxy-D-arabino-heptonate. NAD(+) is bound at residue threonine 145 to threonine 146. 7-phospho-2-dehydro-3-deoxy-D-arabino-heptonate is bound by residues aspartate 152 and lysine 158. Lysine 167 contributes to the NAD(+) binding site. Asparagine 168 contacts 7-phospho-2-dehydro-3-deoxy-D-arabino-heptonate. NAD(+)-binding positions include tyrosine 185 to threonine 188 and asparagine 196. Position 200 (glutamate 200) interacts with Zn(2+). 7-phospho-2-dehydro-3-deoxy-D-arabino-heptonate-binding positions include glutamate 200–lysine 203 and lysine 260. Glutamate 270 serves as the catalytic Proton acceptor; for 3-dehydroquinate synthase activity. Residues arginine 274 to asparagine 278 and histidine 281 contribute to the 7-phospho-2-dehydro-3-deoxy-D-arabino-heptonate site. Histidine 281 is a Zn(2+) binding site. The active-site Proton acceptor; for 3-dehydroquinate synthase activity is histidine 285. Residues histidine 297 and lysine 366 each coordinate 7-phospho-2-dehydro-3-deoxy-D-arabino-heptonate. Histidine 297 lines the Zn(2+) pocket. The EPSP synthase stretch occupies residues valine 407 to isoleucine 858. The active-site For EPSP synthase activity is cysteine 840. The interval asparagine 885–cysteine 1113 is shikimate kinase. Residue glycine 892–threonine 899 coordinates ATP. Residues leucine 1114 to glutamine 1341 are 3-dehydroquinase. Catalysis depends on histidine 1243, which acts as the Proton acceptor; for 3-dehydroquinate dehydratase activity. Lysine 1271 (schiff-base intermediate with substrate; for 3-dehydroquinate dehydratase activity) is an active-site residue. Residues serine 1354–valine 1677 form a shikimate dehydrogenase region.

The protein in the N-terminal section; belongs to the sugar phosphate cyclases superfamily. Dehydroquinate synthase family. It in the 2nd section; belongs to the EPSP synthase family. In the 3rd section; belongs to the shikimate kinase family. This sequence in the 4th section; belongs to the type-I 3-dehydroquinase family. The protein in the C-terminal section; belongs to the shikimate dehydrogenase family. In terms of assembly, homodimer. Zn(2+) is required as a cofactor.

The protein resides in the cytoplasm. The enzyme catalyses 7-phospho-2-dehydro-3-deoxy-D-arabino-heptonate = 3-dehydroquinate + phosphate. It catalyses the reaction 3-dehydroquinate = 3-dehydroshikimate + H2O. It carries out the reaction shikimate + NADP(+) = 3-dehydroshikimate + NADPH + H(+). The catalysed reaction is shikimate + ATP = 3-phosphoshikimate + ADP + H(+). The enzyme catalyses 3-phosphoshikimate + phosphoenolpyruvate = 5-O-(1-carboxyvinyl)-3-phosphoshikimate + phosphate. Its pathway is metabolic intermediate biosynthesis; chorismate biosynthesis; chorismate from D-erythrose 4-phosphate and phosphoenolpyruvate: step 2/7. It participates in metabolic intermediate biosynthesis; chorismate biosynthesis; chorismate from D-erythrose 4-phosphate and phosphoenolpyruvate: step 3/7. The protein operates within metabolic intermediate biosynthesis; chorismate biosynthesis; chorismate from D-erythrose 4-phosphate and phosphoenolpyruvate: step 4/7. It functions in the pathway metabolic intermediate biosynthesis; chorismate biosynthesis; chorismate from D-erythrose 4-phosphate and phosphoenolpyruvate: step 5/7. Its pathway is metabolic intermediate biosynthesis; chorismate biosynthesis; chorismate from D-erythrose 4-phosphate and phosphoenolpyruvate: step 6/7. Its function is as follows. The AROM polypeptide catalyzes 5 consecutive enzymatic reactions in prechorismate polyaromatic amino acid biosynthesis. The protein is Pentafunctional AROM polypeptide of Coprinopsis cinerea (strain Okayama-7 / 130 / ATCC MYA-4618 / FGSC 9003) (Inky cap fungus).